The following is a 127-amino-acid chain: Large ribosomal subunit protein bL21c (127 aa).

It belongs to the bacterial ribosomal protein bL21 family. In terms of assembly, part of the 50S ribosomal subunit.

Its subcellular location is the plastid. It is found in the chloroplast. In terms of biological role, this protein binds to 23S rRNA. In Adiantum capillus-veneris (Maidenhair fern), this protein is Large ribosomal subunit protein bL21c.